A 493-amino-acid polypeptide reads, in one-letter code: MAMKSIMVVGTTSHAGKSLISTAICRILSRRGWRVAPFKGQNMALNAYVTANGGEIGYAQAVQAWAAGVVPWVEMNPILLKPQGDMTSQVIIRGRPVGRVNAADYYEQYFEPGWRAIEESLQHLATEFDLVVCEGAGSPAEINLKHRDLTNMRVAKYLNAPTLLVVDIDRGGAFAHVVGTLELLDPEERQLIKGVVINKFRGQRSLLDPGIKWLEERTGIPVVGVIPYLQEVFPAEDSLDLLERKTHKAHADLQITVVRLPRIANFTDFDPLESEPTVAVKYISPKQDLGHPDAVILPGTKTTIADLILLQKTGMAEAIQNYAASGGTVLGICGGYQILGQMIADPEGIEGQAGRYQGLNLLPIRTVITGQKIARQRQVSSNFPQQGLPVNGFEIHQGRSRVEPQGDSQAFQPLFDDVNLGLVDSCQSVWGSYLHGLFDNGPWRRAWLNRLRQQRGLKSLPTGVANYREQREQMLDNIATEVENHLDLTPFLP.

A GATase cobBQ-type domain is found at 252 to 443 (DLQITVVRLP…LHGLFDNGPW (192 aa)). Catalysis depends on C333, which acts as the Nucleophile. Residue H435 is part of the active site.

It belongs to the CobB/CobQ family. CobQ subfamily.

Its pathway is cofactor biosynthesis; adenosylcobalamin biosynthesis. Its function is as follows. Catalyzes amidations at positions B, D, E, and G on adenosylcobyrinic A,C-diamide. NH(2) groups are provided by glutamine, and one molecule of ATP is hydrogenolyzed for each amidation. The chain is Cobyric acid synthase from Nostoc sp. (strain PCC 7120 / SAG 25.82 / UTEX 2576).